A 457-amino-acid polypeptide reads, in one-letter code: Siroheme synthase (457 aa).

The segment at 1 to 204 (MDHLPIFCQL…NDQKAITETT (204 aa)) is precorrin-2 dehydrogenase /sirohydrochlorin ferrochelatase. NAD(+)-binding positions include 22–23 (DV) and 43–44 (LA). Serine 128 bears the Phosphoserine mark. Positions 216 to 457 (GEVVLVGAGP…RDKLNWFSNH (242 aa)) are uroporphyrinogen-III C-methyltransferase. Proline 225 lines the S-adenosyl-L-methionine pocket. The active-site Proton acceptor is the aspartate 248. Lysine 270 functions as the Proton donor in the catalytic mechanism. S-adenosyl-L-methionine is bound by residues 301 to 303 (GGD), isoleucine 306, 331 to 332 (TA), methionine 382, and glycine 411.

This sequence in the N-terminal section; belongs to the precorrin-2 dehydrogenase / sirohydrochlorin ferrochelatase family. The protein in the C-terminal section; belongs to the precorrin methyltransferase family.

It catalyses the reaction uroporphyrinogen III + 2 S-adenosyl-L-methionine = precorrin-2 + 2 S-adenosyl-L-homocysteine + H(+). It carries out the reaction precorrin-2 + NAD(+) = sirohydrochlorin + NADH + 2 H(+). The enzyme catalyses siroheme + 2 H(+) = sirohydrochlorin + Fe(2+). It functions in the pathway cofactor biosynthesis; adenosylcobalamin biosynthesis; precorrin-2 from uroporphyrinogen III: step 1/1. It participates in cofactor biosynthesis; adenosylcobalamin biosynthesis; sirohydrochlorin from precorrin-2: step 1/1. Its pathway is porphyrin-containing compound metabolism; siroheme biosynthesis; precorrin-2 from uroporphyrinogen III: step 1/1. The protein operates within porphyrin-containing compound metabolism; siroheme biosynthesis; siroheme from sirohydrochlorin: step 1/1. It functions in the pathway porphyrin-containing compound metabolism; siroheme biosynthesis; sirohydrochlorin from precorrin-2: step 1/1. Functionally, multifunctional enzyme that catalyzes the SAM-dependent methylations of uroporphyrinogen III at position C-2 and C-7 to form precorrin-2 via precorrin-1. Then it catalyzes the NAD-dependent ring dehydrogenation of precorrin-2 to yield sirohydrochlorin. Finally, it catalyzes the ferrochelation of sirohydrochlorin to yield siroheme. The sequence is that of Siroheme synthase from Escherichia coli (strain 55989 / EAEC).